A 290-amino-acid chain; its full sequence is ATP synthase subunit a (290 aa).

The next 6 membrane-spanning stretches (helical) occupy residues 44–64 (AFHV…ILLF), 104–124 (VIAP…AIDL), 161–181 (LSVF…GGFI), 194–214 (ILVQ…TLVA), 233–253 (VFIL…GMGV), and 260–280 (AVFH…LTIV).

The protein belongs to the ATPase A chain family. As to quaternary structure, F-type ATPases have 2 components, CF(1) - the catalytic core - and CF(0) - the membrane proton channel. CF(1) has five subunits: alpha(3), beta(3), gamma(1), delta(1), epsilon(1). CF(0) has three main subunits: a(1), b(2) and c(9-12). The alpha and beta chains form an alternating ring which encloses part of the gamma chain. CF(1) is attached to CF(0) by a central stalk formed by the gamma and epsilon chains, while a peripheral stalk is formed by the delta and b chains.

The protein localises to the cell inner membrane. In terms of biological role, key component of the proton channel; it plays a direct role in the translocation of protons across the membrane. The polypeptide is ATP synthase subunit a (Pseudomonas fluorescens (strain ATCC BAA-477 / NRRL B-23932 / Pf-5)).